Here is a 929-residue protein sequence, read N- to C-terminus: LPS-assembly protein LptD (929 aa).

The first 24 residues, Met1 to Ala24, serve as a signal peptide directing secretion. The interval Leu26 to Ala208 is disordered. The span at Gly44–Ser74 shows a compositional bias: basic and acidic residues. Residues Arg154–Ala164 are compositionally biased toward polar residues. The segment covering Asp181–Ala208 has biased composition (basic and acidic residues).

This sequence belongs to the LptD family. In terms of assembly, component of the lipopolysaccharide transport and assembly complex. Interacts with LptE and LptA.

The protein localises to the cell outer membrane. Together with LptE, is involved in the assembly of lipopolysaccharide (LPS) at the surface of the outer membrane. This Nitrosospira multiformis (strain ATCC 25196 / NCIMB 11849 / C 71) protein is LPS-assembly protein LptD.